The chain runs to 143 residues: 6,7-dimethyl-8-ribityllumazine synthase (143 aa).

5-amino-6-(D-ribitylamino)uracil-binding positions include W10, 44-46, and 68-70; these read SFE and CVI. 73 to 74 lines the (2S)-2-hydroxy-3-oxobutyl phosphate pocket; the sequence is DT. H76 (proton donor) is an active-site residue. Y101 contributes to the 5-amino-6-(D-ribitylamino)uracil binding site. R115 contributes to the (2S)-2-hydroxy-3-oxobutyl phosphate binding site.

Belongs to the DMRL synthase family.

It catalyses the reaction (2S)-2-hydroxy-3-oxobutyl phosphate + 5-amino-6-(D-ribitylamino)uracil = 6,7-dimethyl-8-(1-D-ribityl)lumazine + phosphate + 2 H2O + H(+). It functions in the pathway cofactor biosynthesis; riboflavin biosynthesis; riboflavin from 2-hydroxy-3-oxobutyl phosphate and 5-amino-6-(D-ribitylamino)uracil: step 1/2. Catalyzes the formation of 6,7-dimethyl-8-ribityllumazine by condensation of 5-amino-6-(D-ribitylamino)uracil with 3,4-dihydroxy-2-butanone 4-phosphate. This is the penultimate step in the biosynthesis of riboflavin. This chain is 6,7-dimethyl-8-ribityllumazine synthase, found in Bacteroides fragilis (strain YCH46).